A 188-amino-acid polypeptide reads, in one-letter code: Elongation factor P (188 aa).

Position 34 is an N6-(3,6-diaminohexanoyl)-5-hydroxylysine (Lys34).

It belongs to the elongation factor P family. Post-translationally, may be beta-lysylated on the epsilon-amino group of Lys-34 by the combined action of EpmA and EpmB, and then hydroxylated on the C5 position of the same residue by EpmC (if this protein is present). Lysylation is critical for the stimulatory effect of EF-P on peptide-bond formation. The lysylation moiety may extend toward the peptidyltransferase center and stabilize the terminal 3-CCA end of the tRNA. Hydroxylation of the C5 position on Lys-34 may allow additional potential stabilizing hydrogen-bond interactions with the P-tRNA.

Its subcellular location is the cytoplasm. It participates in protein biosynthesis; polypeptide chain elongation. In terms of biological role, involved in peptide bond synthesis. Alleviates ribosome stalling that occurs when 3 or more consecutive Pro residues or the sequence PPG is present in a protein, possibly by augmenting the peptidyl transferase activity of the ribosome. Modification of Lys-34 is required for alleviation. This is Elongation factor P from Erwinia tasmaniensis (strain DSM 17950 / CFBP 7177 / CIP 109463 / NCPPB 4357 / Et1/99).